Consider the following 180-residue polypeptide: Oligoribonuclease (180 aa).

The Exonuclease domain occupies 7–170 (LIWIDLEMTG…DDIRESIAEL (164 aa)). Tyr-128 is a catalytic residue.

It belongs to the oligoribonuclease family.

The protein localises to the cytoplasm. Its function is as follows. 3'-to-5' exoribonuclease specific for small oligoribonucleotides. The protein is Oligoribonuclease of Pseudomonas entomophila (strain L48).